A 168-amino-acid polypeptide reads, in one-letter code: uncharacterized protein (168 aa).

Helical transmembrane passes span 27–47 and 147–167; these read NWLV…RISG and IENG…QVMF.

The protein localises to the membrane. This is an uncharacterized protein from Saccharomyces cerevisiae (strain ATCC 204508 / S288c) (Baker's yeast).